Here is a 116-residue protein sequence, read N- to C-terminus: Aspartate 1-decarboxylase (116 aa).

S25 (schiff-base intermediate with substrate; via pyruvic acid) is an active-site residue. S25 carries the post-translational modification Pyruvic acid (Ser). T57 serves as a coordination point for substrate. Y58 functions as the Proton donor in the catalytic mechanism. 73–75 is a substrate binding site; that stretch reads GAA.

Belongs to the PanD family. In terms of assembly, heterooctamer of four alpha and four beta subunits. The cofactor is pyruvate. Is synthesized initially as an inactive proenzyme, which is activated by self-cleavage at a specific serine bond to produce a beta-subunit with a hydroxyl group at its C-terminus and an alpha-subunit with a pyruvoyl group at its N-terminus.

The protein resides in the cytoplasm. The catalysed reaction is L-aspartate + H(+) = beta-alanine + CO2. Its pathway is cofactor biosynthesis; (R)-pantothenate biosynthesis; beta-alanine from L-aspartate: step 1/1. Its function is as follows. Catalyzes the pyruvoyl-dependent decarboxylation of aspartate to produce beta-alanine. The polypeptide is Aspartate 1-decarboxylase (Leptospira borgpetersenii serovar Hardjo-bovis (strain JB197)).